Consider the following 537-residue polypeptide: MQSTLCLPVPSRSLLRFLRCQSKRAFASANHGRDTITTSAIRCRARSLNTVAIRKQSLALTTACERRVTTVEPSLFDKDPVTRKLPDRNQPLTSQNHFSTSRNAQGFWSGRKSSSSYMPTWNSFLKFAGKKNEKALKPDDLPNHDEFGDNSSIFNNRRTLAAKAASEPRLRCTEVDEHGNVILVDGEFKKTELIAKFGLLPRDLRKIDSSNLPHILIRPSAILLNLLHLKVLIKHDRVLLFDIYGSKTSYPQSAFMYDLQGKLQQKTAPGNASLPYEFRALEAVLTSVTSELEADFEAVREPVMHILSELEDDIDRHKLRMLLILSKRVSTFEQKAKLVRDAIEDLLEADDDLADMYLTEKTHDLYRGEDDHTEVEMLLESYHKLTDEIVQEAGNLVSGIRNTEEIVRAILDANRNALMLLDLKFSVGTLGLAMGTFLAGLYGMNLENFIEETNWGFAGVTGVSVVFSLIVCWYGLTKLRRVQRIKMMDAERPAIARGQSYFPDDRSALGLLDNRNREMLRRINMQKAVSQQKKKWL.

The transit peptide at 1–26 (MQSTLCLPVPSRSLLRFLRCQSKRAF) directs the protein to the mitochondrion. The disordered stretch occupies residues 79–112 (DPVTRKLPDRNQPLTSQNHFSTSRNAQGFWSGRK). The segment covering 90–112 (QPLTSQNHFSTSRNAQGFWSGRK) has biased composition (polar residues). The next 2 membrane-spanning stretches (helical) occupy residues 425–445 (FSVGTLGLAMGTFLAGLYGMN) and 456–476 (GFAGVTGVSVVFSLIVCWYGL). Positions 442-445 (YGMN) match the YGMN motif.

Belongs to the CorA metal ion transporter (MIT) (TC 1.A.35) family. In terms of assembly, homopentamer. Forms homooligomers. Interacts with MFM1.

Its subcellular location is the mitochondrion inner membrane. Functionally, high-conductance magnesium-selective channel that mediates the influx of magnesium into the mitochondrial matrix. Essential for the splicing of mRNA group II introns in mitochondria by affecting mitochondrial magnesium concentrations, which are critical for group II intron splicing. It also suppresses a variety of mitochondrial intron mutations and its absence may disturb the assembly of mitochondrial membrane complexes. The sequence is that of Mitochondrial inner membrane magnesium transporter MRS2 (MRS2) from Gibberella zeae (strain ATCC MYA-4620 / CBS 123657 / FGSC 9075 / NRRL 31084 / PH-1) (Wheat head blight fungus).